Reading from the N-terminus, the 346-residue chain is Acetyl-coenzyme A carboxylase carboxyl transferase subunit beta (346 aa).

Positions 24–292 (LWIKCPKSGD…LPEVEPIAVA (269 aa)) constitute a CoA carboxyltransferase N-terminal domain. Acidic residues predominate over residues 300-311 (AEAEAAPDEVVE). A disordered region spans residues 300–346 (AEAEAAPDEVVEVEAPAVDEIVEEKPAATKAKPRSKAKSKAAPKTDE). Residues 330–340 (AKPRSKAKSKA) show a composition bias toward basic residues.

This sequence belongs to the AccD/PCCB family. As to quaternary structure, acetyl-CoA carboxylase is a heterohexamer composed of biotin carboxyl carrier protein (AccB), biotin carboxylase (AccC) and two subunits each of ACCase subunit alpha (AccA) and ACCase subunit beta (AccD).

It localises to the cytoplasm. It catalyses the reaction N(6)-carboxybiotinyl-L-lysyl-[protein] + acetyl-CoA = N(6)-biotinyl-L-lysyl-[protein] + malonyl-CoA. Its pathway is lipid metabolism; malonyl-CoA biosynthesis; malonyl-CoA from acetyl-CoA: step 1/1. Its function is as follows. Component of the acetyl coenzyme A carboxylase (ACC) complex. Biotin carboxylase (BC) catalyzes the carboxylation of biotin on its carrier protein (BCCP) and then the CO(2) group is transferred by the transcarboxylase to acetyl-CoA to form malonyl-CoA. The chain is Acetyl-coenzyme A carboxylase carboxyl transferase subunit beta from Hirschia baltica (strain ATCC 49814 / DSM 5838 / IFAM 1418).